The sequence spans 349 residues: MMSAEETVTQNAPNTVQDQVEASVDAAVHASAEQSNTPAQQADDFRVFVGRLSTSTKKSEIRSLFETVGTVRKVTIPFRRVRRGTRLVPSGIAFVTFNNQEDVDKAIETLNGKTLDDREIVVQKARPVQEQPIKDRKKSKNKNGEEPETSTSVENAESAKGSSDENEANTATAPSSNEANGVDKKQNEIKGKGGSGKNKAKPLPPNSIYVSGLSVTLTNEGLKEMFDAYNPTRARIAVRSLPPYIIRRIKLRGEQRRGRGFGFVSFANAEDQSRAIEEMNGKQVGDLTLVVKSAVFREDKQNDENEKNENEPIEASESAPTNVSDSTEPKASEVDSEEKSGVTASAITA.

The RRM 1 domain maps to 45–127; it reads FRVFVGRLST…REIVVQKARP (83 aa). 2 disordered regions span residues 121-208 and 298-349; these read VVQK…PNSI and EDKQ…AITA. Serine 152 bears the Phosphoserine mark. Residues 168-179 show a composition bias toward polar residues; it reads ANTATAPSSNEA. The span at 181–191 shows a compositional bias: basic and acidic residues; the sequence is GVDKKQNEIKG. The RRM 2 domain occupies 206 to 296; sequence NSIYVSGLSV…LTLVVKSAVF (91 aa). 2 stretches are compositionally biased toward basic and acidic residues: residues 298–310 and 327–340; these read EDKQ…KNEN and TEPK…EEKS.

The protein localises to the cytoplasm. Its subcellular location is the nucleus. It is found in the chromosome. It localises to the telomere. Its function is as follows. Binds single-stranded telomeric sequences of the type (TG[1-3])n in vitro. Has a role in meiosis. This chain is Single-stranded TG1-3 DNA-binding protein (tcg1), found in Schizosaccharomyces pombe (strain 972 / ATCC 24843) (Fission yeast).